A 927-amino-acid chain; its full sequence is E3 ubiquitin-protein ligase HOS1 (927 aa).

The RING-type; degenerate zinc-finger motif lies at 53–93; that stretch reads CRATRDLASCGRFVNYVLNPCGHASLCTECCQRCDVCPICR. Disordered stretches follow at residues 678-699, 782-806, and 832-927; these read SGQFSEMEDASEGAKKSDLPDA, FKDLNRARGNSQLQGKRTEESSPEV, and VKSS…FAAR. Residues 797 to 806 are compositionally biased toward basic and acidic residues; the sequence is KRTEESSPEV. Polar residues-rich tracts occupy residues 832 to 851 and 878 to 892; these read VKSSSNHLNGSSQKPESTFF and NNNNVLATESRNNSG. Over residues 917–927 the composition is skewed to basic residues; the sequence is KGRRRRRFAAR.

Interacts with SCRM/ICE1, FLK and MSI4/FVE. In terms of tissue distribution, ubiquitously expressed with higher levels in leaf vasculature, roots and root tips.

It is found in the nucleus. The protein resides in the cytoplasm. The enzyme catalyses S-ubiquitinyl-[E2 ubiquitin-conjugating enzyme]-L-cysteine + [acceptor protein]-L-lysine = [E2 ubiquitin-conjugating enzyme]-L-cysteine + N(6)-ubiquitinyl-[acceptor protein]-L-lysine.. The protein operates within protein modification; protein ubiquitination. In terms of biological role, E3 ubiquitin-protein ligase that mediates ubiquitination and subsequent proteasomal degradation of the transcription factor ICE1. Acts as a negative regulator of cold signaling pathways. Probably involved in recruiting the NUP107-160 subcomplex of the nuclear pore complex to chromatin. Controls flowering time in response to ambient temperatures (16 and 23 degrees Celsius) and intermittent cold, probably via the regulation of FT and TSF levels. This is E3 ubiquitin-protein ligase HOS1 (HOS1) from Arabidopsis thaliana (Mouse-ear cress).